Reading from the N-terminus, the 140-residue chain is Phosphoribosyl-AMP cyclohydrolase (140 aa).

Position 78 (Asp78) interacts with Mg(2+). A Zn(2+)-binding site is contributed by Cys79. Mg(2+) contacts are provided by Asp80 and Asp82. Cys96 and Cys103 together coordinate Zn(2+).

This sequence belongs to the PRA-CH family. Homodimer. The cofactor is Mg(2+). Requires Zn(2+) as cofactor.

It is found in the cytoplasm. It catalyses the reaction 1-(5-phospho-beta-D-ribosyl)-5'-AMP + H2O = 1-(5-phospho-beta-D-ribosyl)-5-[(5-phospho-beta-D-ribosylamino)methylideneamino]imidazole-4-carboxamide. It participates in amino-acid biosynthesis; L-histidine biosynthesis; L-histidine from 5-phospho-alpha-D-ribose 1-diphosphate: step 3/9. Catalyzes the hydrolysis of the adenine ring of phosphoribosyl-AMP. This is Phosphoribosyl-AMP cyclohydrolase from Ralstonia nicotianae (strain ATCC BAA-1114 / GMI1000) (Ralstonia solanacearum).